We begin with the raw amino-acid sequence, 120 residues long: MNLSYLVACGLMITLLSVRMGAKPLSQAQQKSFRSLLGEELAEFLESEEKERRLDAVRSRLRLLRDLRMDTRARGVWARLLNDQPVPRRHKTGIKKGGSSRSGCFGHKMDRIGTISGMGC.

An N-terminal signal peptide occupies residues 1–22 (MNLSYLVACGLMITLLSVRMGA). Residues 23–96 (KPLSQAQQKS…PRRHKTGIKK (74 aa)) constitute a propeptide that is removed on maturation. Cys104 and Cys120 are oxidised to a cystine.

This sequence belongs to the natriuretic peptide family.

The protein resides in the secreted. Exhibits natriuretic and vasodepressant activity. Has cGMP-stimulating activity. May help to regulate body fluid homeostasis in a variety of aquatic environments. This chain is C-type natriuretic peptide 4, found in Takifugu rubripes (Japanese pufferfish).